Here is a 251-residue protein sequence, read N- to C-terminus: Protein DEEPER ROOTING 1 (251 aa).

The IGT motif motif lies at 46-52 (SLLAIGT). The stretch at 64–105 (VENSSDNVQSVQDTVKFTEEEVDKIRKEFETLLAIKDQAEAQ) forms a coiled coil.

This sequence belongs to the LAZY family.

In terms of biological role, involved in the control of root growth angle. Involved in cell elongation in the root tip that causes asymmetric root growth and downward bending of the root in response to gravity. The protein is Protein DEEPER ROOTING 1 of Oryza sativa subsp. japonica (Rice).